The following is a 212-amino-acid chain: Adenylate kinase (212 aa).

14 to 19 (GSGKGT) lines the ATP pocket. The segment at 34-63 (STGDLFRKKISEDSQFAAQIQNYLSSGSYV) is NMP. AMP-binding positions include Thr-35, Arg-40, 61-63 (SYV), 89-92 (GYPR), and Gln-96. Positions 126–163 (QRLFCQKCQKSYNLLLAKPKNELKCDLDSTDLITRNDD) are LID. Arg-127 contacts ATP. Zn(2+) is bound by residues Cys-130 and Cys-133. Residue 136-137 (SY) participates in ATP binding. Zn(2+)-binding residues include Cys-150 and Asp-153. AMP contacts are provided by Arg-160 and Arg-171. Gln-199 serves as a coordination point for ATP.

The protein belongs to the adenylate kinase family. As to quaternary structure, monomer.

Its subcellular location is the cytoplasm. The enzyme catalyses AMP + ATP = 2 ADP. The protein operates within purine metabolism; AMP biosynthesis via salvage pathway; AMP from ADP: step 1/1. In terms of biological role, catalyzes the reversible transfer of the terminal phosphate group between ATP and AMP. Plays an important role in cellular energy homeostasis and in adenine nucleotide metabolism. The sequence is that of Adenylate kinase from Mesomycoplasma hyopneumoniae (strain J / ATCC 25934 / NCTC 10110) (Mycoplasma hyopneumoniae).